Reading from the N-terminus, the 713-residue chain is Leucine-rich repeat neuronal protein 2 (713 aa).

A signal peptide spans 1–18 (MRLLVAPLLLAWVAGATA). The Extracellular portion of the chain corresponds to 19-630 (AVPVVPWHVP…CHRALGDRPG (612 aa)). Residues 20-69 (VPVVPWHVPCPPQCACQIRPWYTPRSSYREATTVDCNDLFLTAVPPALPA) form the LRRNT domain. LRR repeat units lie at residues 70–91 (GTQT…ELGY), 94–115 (NLTE…DFHA), 118–139 (QLLS…SFAG), 142–163 (SLQE…AFSG), 166–187 (NLLR…WFEM), 190–211 (NLEI…NFRP), 214–235 (NLRS…ALEG), 238–259 (SLES…ALEQ), 262–283 (GLKF…DFAN), 286–305 (HLKE…DKFA), 311–333 (ELTK…AFHH), and 336–357 (QMET…TVES). The N-linked (GlcNAc...) asparagine glycan is linked to asparagine 94. The LRRCT domain maps to 369 to 422 (NPIRCDCVIRWANATGTRVRFIEPQSTLCAEPPDLQRLPVREVPFREMTDHCLP). An N-linked (GlcNAc...) asparagine glycan is attached at asparagine 381. The Ig-like C2-type domain maps to 422–511 (PLISPRSFPP…LVGADTKTVS (90 aa)). Residues cysteine 445 and cysteine 497 are joined by a disulfide bond. Asparagine 555 and asparagine 583 each carry an N-linked (GlcNAc...) asparagine glycan. The chain crosses the membrane as a helical span at residues 631–651 (LIAILALAVLLLAAGLAAHLG). Residues 652 to 713 (TGQPRKGVGG…TLLPPLSQNS (62 aa)) lie on the Cytoplasmic side of the membrane.

In terms of tissue distribution, overamplified in malignant gliomas.

It localises to the membrane. This Homo sapiens (Human) protein is Leucine-rich repeat neuronal protein 2 (LRRN2).